The primary structure comprises 270 residues: Phthiotriol/phenolphthiotriol dimycocerosates methyltransferase (270 aa).

It belongs to the methyltransferase superfamily. Phthiotriol/phenolphthiotriol dimycocerosates methyltransferase family.

In terms of biological role, catalyzes the methylation of the lipid moiety of the intermediate compounds phthiotriol and glycosylated phenolphthiotriol dimycoserosates to form phthiocerol dimycocerosates (DIM A) and glycosylated phenolphthiocerol dimycocerosates (PGL). The polypeptide is Phthiotriol/phenolphthiotriol dimycocerosates methyltransferase (Mycobacterium bovis (strain ATCC BAA-935 / AF2122/97)).